We begin with the raw amino-acid sequence, 149 residues long: Major outer capsid protein (149 aa).

As to quaternary structure, homotrimer.

It localises to the virion. Assembles to form an icosahedral capsid with a T=13 symmetry. Drives the penetration of the inner capsid (core) into the cytoplasm. This Pseudomonas phage phi6 (Bacteriophage phi-6) protein is Major outer capsid protein (P8).